A 376-amino-acid polypeptide reads, in one-letter code: Queuine tRNA-ribosyltransferase (376 aa).

D90 serves as the catalytic Proton acceptor. Residues 90–94, D144, Q193, and G220 contribute to the substrate site; that span reads DSGGF. Positions 251–257 are RNA binding; sequence GVGTPED. Residue D270 is the Nucleophile of the active site. The tract at residues 275–279 is RNA binding; important for wobble base 34 recognition; it reads TRNAR. Residues C308, C310, C313, and H339 each contribute to the Zn(2+) site.

The protein belongs to the queuine tRNA-ribosyltransferase family. Homodimer. Within each dimer, one monomer is responsible for RNA recognition and catalysis, while the other monomer binds to the replacement base PreQ1. The cofactor is Zn(2+).

The catalysed reaction is 7-aminomethyl-7-carbaguanine + guanosine(34) in tRNA = 7-aminomethyl-7-carbaguanosine(34) in tRNA + guanine. It functions in the pathway tRNA modification; tRNA-queuosine biosynthesis. In terms of biological role, catalyzes the base-exchange of a guanine (G) residue with the queuine precursor 7-aminomethyl-7-deazaguanine (PreQ1) at position 34 (anticodon wobble position) in tRNAs with GU(N) anticodons (tRNA-Asp, -Asn, -His and -Tyr). Catalysis occurs through a double-displacement mechanism. The nucleophile active site attacks the C1' of nucleotide 34 to detach the guanine base from the RNA, forming a covalent enzyme-RNA intermediate. The proton acceptor active site deprotonates the incoming PreQ1, allowing a nucleophilic attack on the C1' of the ribose to form the product. After dissociation, two additional enzymatic reactions on the tRNA convert PreQ1 to queuine (Q), resulting in the hypermodified nucleoside queuosine (7-(((4,5-cis-dihydroxy-2-cyclopenten-1-yl)amino)methyl)-7-deazaguanosine). In Cupriavidus necator (strain ATCC 17699 / DSM 428 / KCTC 22496 / NCIMB 10442 / H16 / Stanier 337) (Ralstonia eutropha), this protein is Queuine tRNA-ribosyltransferase.